Reading from the N-terminus, the 468-residue chain is ATP synthase subunit beta 2 (468 aa).

An ATP-binding site is contributed by 145–152 (GGAGVGKT).

The protein belongs to the ATPase alpha/beta chains family. As to quaternary structure, F-type ATPases have 2 components, CF(1) - the catalytic core - and CF(0) - the membrane proton channel. CF(1) has five subunits: alpha(3), beta(3), gamma(1), delta(1), epsilon(1). CF(0) has three main subunits: a(1), b(2) and c(9-12). The alpha and beta chains form an alternating ring which encloses part of the gamma chain. CF(1) is attached to CF(0) by a central stalk formed by the gamma and epsilon chains, while a peripheral stalk is formed by the delta and b chains.

It is found in the cell membrane. The catalysed reaction is ATP + H2O + 4 H(+)(in) = ADP + phosphate + 5 H(+)(out). Functionally, produces ATP from ADP in the presence of a proton gradient across the membrane. The catalytic sites are hosted primarily by the beta subunits. The chain is ATP synthase subunit beta 2 from Mycoplasmopsis pulmonis (strain UAB CTIP) (Mycoplasma pulmonis).